We begin with the raw amino-acid sequence, 64 residues long: Large ribosomal subunit protein bL35 (64 aa).

This sequence belongs to the bacterial ribosomal protein bL35 family.

The sequence is that of Large ribosomal subunit protein bL35 from Wolinella succinogenes (strain ATCC 29543 / DSM 1740 / CCUG 13145 / JCM 31913 / LMG 7466 / NCTC 11488 / FDC 602W) (Vibrio succinogenes).